Reading from the N-terminus, the 467-residue chain is Putative gluconeogenesis factor (467 aa).

Pro residues predominate over residues 1–12 (MSAPPAPPPDRS). Residues 1–27 (MSAPPAPPPDRSAPPDRTDSAQTEPTR) are disordered.

The protein belongs to the gluconeogenesis factor family.

It is found in the cytoplasm. Its function is as follows. Required for morphogenesis under gluconeogenic growth conditions. The chain is Putative gluconeogenesis factor from Deinococcus radiodurans (strain ATCC 13939 / DSM 20539 / JCM 16871 / CCUG 27074 / LMG 4051 / NBRC 15346 / NCIMB 9279 / VKM B-1422 / R1).